The sequence spans 186 residues: Ribosome-recycling factor (186 aa).

Belongs to the RRF family.

It is found in the cytoplasm. Its function is as follows. Responsible for the release of ribosomes from messenger RNA at the termination of protein biosynthesis. May increase the efficiency of translation by recycling ribosomes from one round of translation to another. This chain is Ribosome-recycling factor, found in Bartonella tribocorum (strain CIP 105476 / IBS 506).